The following is a 339-amino-acid chain: Biotin synthase (339 aa).

Positions 55–282 constitute a Radical SAM core domain; it reads NAVQLSTLLS…KAVVRLSAGR (228 aa). Positions 70, 74, and 77 each coordinate [4Fe-4S] cluster. [2Fe-2S] cluster-binding residues include Cys114, Cys145, Cys205, and Arg277.

It belongs to the radical SAM superfamily. Biotin synthase family. Homodimer. [4Fe-4S] cluster is required as a cofactor. Requires [2Fe-2S] cluster as cofactor.

It catalyses the reaction (4R,5S)-dethiobiotin + (sulfur carrier)-SH + 2 reduced [2Fe-2S]-[ferredoxin] + 2 S-adenosyl-L-methionine = (sulfur carrier)-H + biotin + 2 5'-deoxyadenosine + 2 L-methionine + 2 oxidized [2Fe-2S]-[ferredoxin]. It participates in cofactor biosynthesis; biotin biosynthesis; biotin from 7,8-diaminononanoate: step 2/2. Functionally, catalyzes the conversion of dethiobiotin (DTB) to biotin by the insertion of a sulfur atom into dethiobiotin via a radical-based mechanism. This is Biotin synthase from Burkholderia vietnamiensis (strain G4 / LMG 22486) (Burkholderia cepacia (strain R1808)).